We begin with the raw amino-acid sequence, 432 residues long: Adenylosuccinate synthetase 2 (432 aa).

GTP contacts are provided by residues 12–18 and 40–42; these read GDEGKGR and GHT. The active-site Proton acceptor is the Asp13. Asp13 and Gly40 together coordinate Mg(2+). IMP contacts are provided by residues 13-16, 38-41, Thr128, Arg142, Gln222, Thr237, and Arg301; these read DEGK and NAGH. The active-site Proton donor is His41. 297 to 303 is a substrate binding site; sequence VNTGRPR. Residues Arg303, 329–331, and 411–413 each bind GTP; these read KLD and TTG.

This sequence belongs to the adenylosuccinate synthetase family. As to quaternary structure, homodimer. Mg(2+) is required as a cofactor.

It is found in the cytoplasm. It catalyses the reaction IMP + L-aspartate + GTP = N(6)-(1,2-dicarboxyethyl)-AMP + GDP + phosphate + 2 H(+). Its pathway is purine metabolism; AMP biosynthesis via de novo pathway; AMP from IMP: step 1/2. In terms of biological role, plays an important role in the de novo pathway of purine nucleotide biosynthesis. Catalyzes the first committed step in the biosynthesis of AMP from IMP. In Burkholderia lata (strain ATCC 17760 / DSM 23089 / LMG 22485 / NCIMB 9086 / R18194 / 383), this protein is Adenylosuccinate synthetase 2.